Here is a 145-residue protein sequence, read N- to C-terminus: Basic phospholipase A2 cPt10 (145 aa).

The signal sequence occupies residues 1–21 (MYPAHLLVLLAVCVSLLGASA). Positions 22–27 (IPPLPL) are excised as a propeptide. 7 cysteine pairs are disulfide-bonded: cysteine 38–cysteine 98, cysteine 54–cysteine 144, cysteine 56–cysteine 72, cysteine 71–cysteine 125, cysteine 78–cysteine 118, cysteine 87–cysteine 111, and cysteine 105–cysteine 116. Ca(2+) contacts are provided by tyrosine 55, glycine 57, and glycine 59. The active site involves histidine 75. Aspartate 76 provides a ligand contact to Ca(2+). The active site involves aspartate 119.

The protein belongs to the phospholipase A2 family. Group I subfamily. D49 sub-subfamily. Ca(2+) is required as a cofactor. As to expression, expressed by the venom gland.

It is found in the secreted. The enzyme catalyses a 1,2-diacyl-sn-glycero-3-phosphocholine + H2O = a 1-acyl-sn-glycero-3-phosphocholine + a fatty acid + H(+). PLA2 catalyzes the calcium-dependent hydrolysis of the 2-acyl groups in 3-sn-phosphoglycerides. The sequence is that of Basic phospholipase A2 cPt10 from Laticauda semifasciata (Black-banded sea krait).